The sequence spans 237 residues: Phosphoribosylaminoimidazole-succinocarboxamide synthase (237 aa).

It belongs to the SAICAR synthetase family.

The enzyme catalyses 5-amino-1-(5-phospho-D-ribosyl)imidazole-4-carboxylate + L-aspartate + ATP = (2S)-2-[5-amino-1-(5-phospho-beta-D-ribosyl)imidazole-4-carboxamido]succinate + ADP + phosphate + 2 H(+). The protein operates within purine metabolism; IMP biosynthesis via de novo pathway; 5-amino-1-(5-phospho-D-ribosyl)imidazole-4-carboxamide from 5-amino-1-(5-phospho-D-ribosyl)imidazole-4-carboxylate: step 1/2. The sequence is that of Phosphoribosylaminoimidazole-succinocarboxamide synthase from Salmonella arizonae (strain ATCC BAA-731 / CDC346-86 / RSK2980).